A 355-amino-acid polypeptide reads, in one-letter code: Guanine nucleotide-binding protein alpha-12 subunit (355 aa).

In terms of domain architecture, G-alpha spans 28–355; sequence RQINLLLLGS…EQNLKTLMMQ (328 aa). The tract at residues 31–44 is G1 motif; it reads NLLLLGSGESGKST. Residues 36-43, 176-182, 201-205, 270-273, and A327 contribute to the GTP site; these read GSGESGKS, LFCRKAT, DVGGQ, and NKND. Residues S43 and T182 each contribute to the Mg(2+) site. The interval 174-182 is G2 motif; the sequence is DILFCRKAT. Residues 197 to 206 are G3 motif; that stretch reads FRFIDVGGQR. The G4 motif stretch occupies residues 266–273; that stretch reads ILFMNKND. The segment at 325-330 is G5 motif; that stretch reads TTAVDT.

The protein belongs to the G-alpha family. In terms of assembly, g proteins are composed of 3 units; alpha, beta and gamma. The alpha chain contains the guanine nucleotide binding site.

Functionally, guanine nucleotide-binding proteins (G proteins) are involved as modulators or transducers in various transmembrane signaling systems. May play a role in resistance to fungal infection in the epidermis by regulating the up-regulation of several antimicrobial peptides of the NLP and CNC families. Upstream of plc-3, tpa-1 and the p38-like pathway, required for the expression of antimicrobial peptide nlp-29 in the epidermis in response to fungal infection or physical injury. This Caenorhabditis elegans protein is Guanine nucleotide-binding protein alpha-12 subunit (gpa-12).